The primary structure comprises 271 residues: Mannosyl-3-phosphoglycerate phosphatase (271 aa).

Asp-13 acts as the Nucleophile in catalysis. Residues Asp-13, Asp-15, and Asp-214 each coordinate Mg(2+).

The protein belongs to the HAD-like hydrolase superfamily. MPGP family. Requires Mg(2+) as cofactor.

The protein localises to the cytoplasm. It carries out the reaction 2-O-(alpha-D-mannosyl)-3-phosphoglycerate + H2O = (2R)-2-O-(alpha-D-mannosyl)-glycerate + phosphate. The protein is Mannosyl-3-phosphoglycerate phosphatase of Escherichia coli O17:K52:H18 (strain UMN026 / ExPEC).